A 488-amino-acid chain; its full sequence is Histone deacetylase 2 (488 aa).

The tract at residues 9-322 is histone deacetylase; that stretch reads KKKVCYYYDG…WTYETAVALD (314 aa). The 1D-myo-inositol 1,4,5,6-tetrakisphosphate site is built by G28 and K32. At K75 the chain carries N6-acetyllysine; alternate. K75 participates in a covalent cross-link: Glycyl lysine isopeptide (Lys-Gly) (interchain with G-Cter in SUMO2); alternate. H142 is a catalytic residue. 8 residues coordinate Ca(2+): D175, D177, H179, F188, T191, V194, S198, and F199. Residues D177 and H179 each coordinate Zn(2+). K221 carries the N6-acetyllysine modification. Position 223 (Y223) interacts with Ca(2+). C262 carries the post-translational modification S-nitrosocysteine. D265 contacts Zn(2+). 1D-myo-inositol 1,4,5,6-tetrakisphosphate is bound at residue R271. C274 carries the post-translational modification S-nitrosocysteine. The tract at residues 389–488 is disordered; that stretch reads AVHEDSGDED…GTKSEQLSNP (100 aa). A phosphoserine mark is found at S394, S407, S422, and S424. Over residues 402–417 the composition is skewed to basic and acidic residues; sequence PDKRISIRASDKRIAC. Acidic residues predominate over residues 418–428; sequence DEEFSDSEDEG. Residues 429 to 481 show a composition bias toward basic and acidic residues; the sequence is EGGRRNVADHKKGAKKARIEEDKKETEDKKTDVKEEDKSKDNSGEKTDTKGTK. Glycyl lysine isopeptide (Lys-Gly) (interchain with G-Cter in SUMO2) cross-links involve residues K439, K452, K458, K462, K478, and K481.

It belongs to the histone deacetylase family. HD type 1 subfamily. Part of the core histone deacetylase (HDAC) complex composed of HDAC1, HDAC2, RBBP4 and RBBP7, the core complex associates with SIN3, SAP18 and SAP30 to form the SIN3 HDAC complex. Component of the nucleosome remodeling and deacetylase (NuRD) repressor complex, composed of core proteins MTA1, MTA2, MTA3, RBBP4, RBBP7, HDAC1, HDAC2, MBD2, MBD3, and peripherally associated proteins CDK2AP1, CDK2AP2, GATAD2A, GATAD2B, CHD3, CHD4 and CHD5. The exact stoichiometry of the NuRD complex is unknown, and some subunits such as MBD2 and MBD3, GATAD2A and GATAD2B, and CHD3, CHD4 and CHD5 define mutually exclusive NuRD complexes. Component of a RCOR/GFI/KDM1A/HDAC complex. Component of a BHC histone deacetylase complex that contains HDAC1, HDAC2, HMG20B, KDM1A, RCOR1 and PHF21A. The BHC complex may also contain ZMYM2, ZNF217, ZMYM3, GSE1 and GTF2I. Part of a complex containing the core histones H2A, H2B, H3 and H4, DEK and unphosphorylated DAXX. Part of a complex containing ATR and CHD4. Forms a heterologous complex at least with YY1. Interacts in the late S-phase of DNA-replication with DNMT1 in the other transcriptional repressor complex composed of DNMT1, DMAP1, PCNA, CAF1. Component of a mSin3A corepressor complex that contains SIN3A, SAP130, SUDS3, ARID4B, HDAC1 and HDAC2. Part of a complex composed of TRIM28, HDAC1, HDAC2 and EHMT2. Part of a complex containing at least CDYL, MIER1, MIER2, HDAC1 and HDAC2. Component of a histone deacetylase complex containing DNTTIP1, ZNF541, HDAC1 and HDAC2. Forms a complex comprising APPL1, RUVBL2, APPL2, CTNNB1 and HDAC1. Interacts directly with GFI1. Interacts directly with GFI1B. Interacts with APEX1; the interaction is not dependent on the acetylated status of APEX1. Interacts with ATR. Interacts with BCL6 (non-acetylated form). Interacts with BEND3. Interacts with CBFA2T3. Interacts with CDK2AP1. Interacts with CHD4. Interacts with CHD5. Interacts with CHFR. Interacts with CRY1. Interacts with DNMT1. Interacts with GATAD2A. Interacts with HCFC1. Interacts with HDAC7. Interacts with HDAC10. Interacts with INSM1. Interacts with KDM4A. Interacts with MACROH2A1 (via the non-histone region). Interacts with MBD3L2. Interacts with MTA1, with a preference for sumoylated MTA1. Interacts with NACC2. Interacts with NRIP1. Interacts with PELP1. Interacts with PIMREG. Interacts with PRDM6. Interacts with PWWP2B. Interacts with SAP30. Interacts with SAP30L. Interacts with SETDB1. Interacts with SIX3. Interacts with SMARCAD1. Interacts with SNW1. Interacts with SPHK2. Interacts with SPEN/MINT. Interacts (CK2 phosphorylated form) with SP3. Interacts with SUV39H1. Interacts with TSHZ3 (via its N-terminus). Interacts with ZMYND8. Interacts with ZNF431. Interacts with ZNF263; recruited to the SIX3 promoter along with other proteins involved in chromatin modification and transcriptional corepression where it contributes to transcriptional repression. Identified in a complex with HDAC1, KCTD19, DNTTIP1 and ZNF541. Component of the SIN3B complex, which includes SIN3B, HDAC2, PHF12 and MORF4L1; interacts directly with all subunits. The cofactor is Zn(2+). Requires Ca(2+) as cofactor. Post-translationally, S-nitrosylated by GAPDH. In neurons, S-nitrosylation at Cys-262 and Cys-274 does not affect enzyme activity, but induces HDAC2 release from chromatin. This in turn increases acetylation of histones surrounding neurotrophin-dependent gene promoters and promotes their transcription. In embryonic cortical neurons, S-Nitrosylation regulates dendritic growth and branching. Widely expressed; lower levels in brain and lung.

The protein localises to the nucleus. It localises to the cytoplasm. It carries out the reaction N(6)-acetyl-L-lysyl-[histone] + H2O = L-lysyl-[histone] + acetate. The enzyme catalyses N(6)-acetyl-L-lysyl-[protein] + H2O = L-lysyl-[protein] + acetate. It catalyses the reaction N(6)-(2E)-butenoyl-L-lysyl-[protein] + H2O = (2E)-2-butenoate + L-lysyl-[protein]. The catalysed reaction is N(6)-(2-hydroxyisobutanoyl)-L-lysyl-[protein] + H2O = 2-hydroxy-2-methylpropanoate + L-lysyl-[protein]. It carries out the reaction N(6)-[(S)-lactoyl]-L-lysyl-[protein] + H2O = (S)-lactate + L-lysyl-[protein]. With respect to regulation, inositol tetraphosphate (1D-myo-inositol 1,4,5,6-tetrakisphosphate) may act as an intermolecular glue between HDAC2 and N-Cor repressor complex components. Its function is as follows. Histone deacetylase that catalyzes the deacetylation of lysine residues on the N-terminal part of the core histones (H2A, H2B, H3 and H4). Histone deacetylation gives a tag for epigenetic repression and plays an important role in transcriptional regulation, cell cycle progression and developmental events. Histone deacetylases act via the formation of large multiprotein complexes. Forms transcriptional repressor complexes by associating with MAD, SIN3, YY1 and N-COR. Component of a RCOR/GFI/KDM1A/HDAC complex that suppresses, via histone deacetylase (HDAC) recruitment, a number of genes implicated in multilineage blood cell development. Acts as a component of the histone deacetylase NuRD complex which participates in the remodeling of chromatin. Component of the SIN3B complex that represses transcription and counteracts the histone acetyltransferase activity of EP300 through the recognition H3K27ac marks by PHF12 and the activity of the histone deacetylase HDAC2. Also deacetylates non-histone targets: deacetylates TSHZ3, thereby regulating its transcriptional repressor activity. May be involved in the transcriptional repression of circadian target genes, such as PER1, mediated by CRY1 through histone deacetylation. Involved in MTA1-mediated transcriptional corepression of TFF1 and CDKN1A. In addition to protein deacetylase activity, also acts as a protein-lysine deacylase by recognizing other acyl groups: catalyzes removal of (2E)-butenoyl (crotonyl), lactoyl (lactyl) and 2-hydroxyisobutanoyl (2-hydroxyisobutyryl) acyl groups from lysine residues, leading to protein decrotonylation, delactylation and de-2-hydroxyisobutyrylation, respectively. This Homo sapiens (Human) protein is Histone deacetylase 2.